The chain runs to 156 residues: MNIIEGNLHLNGDEKVAIINGRFNHIITDRLVEGAKDAFLRHGGKEENLDLILVPGAFEIPMALEKVLSSGKWDAVCCVGAVIRGSTPHFDYVSAETTKGIANVTLKYGKPVTFGVLTVDSIEQAIERAGSKAGNKGFEAMTSVVELLNLYKNIKA.

5-amino-6-(D-ribitylamino)uracil is bound by residues Phe23, 57–59, and 81–83; these read AFE and AVI. 86–87 is a binding site for (2S)-2-hydroxy-3-oxobutyl phosphate; it reads ST. His89 (proton donor) is an active-site residue. Phe114 lines the 5-amino-6-(D-ribitylamino)uracil pocket. Residue Arg128 participates in (2S)-2-hydroxy-3-oxobutyl phosphate binding.

This sequence belongs to the DMRL synthase family.

It catalyses the reaction (2S)-2-hydroxy-3-oxobutyl phosphate + 5-amino-6-(D-ribitylamino)uracil = 6,7-dimethyl-8-(1-D-ribityl)lumazine + phosphate + 2 H2O + H(+). The protein operates within cofactor biosynthesis; riboflavin biosynthesis; riboflavin from 2-hydroxy-3-oxobutyl phosphate and 5-amino-6-(D-ribitylamino)uracil: step 1/2. Catalyzes the formation of 6,7-dimethyl-8-ribityllumazine by condensation of 5-amino-6-(D-ribitylamino)uracil with 3,4-dihydroxy-2-butanone 4-phosphate. This is the penultimate step in the biosynthesis of riboflavin. This Campylobacter fetus subsp. fetus (strain 82-40) protein is 6,7-dimethyl-8-ribityllumazine synthase.